Reading from the N-terminus, the 174-residue chain is uncharacterized protein (174 aa).

This is an uncharacterized protein from Caenorhabditis elegans.